The chain runs to 348 residues: uncharacterized protein (348 aa).

This is an uncharacterized protein from Caenorhabditis elegans.